The following is a 1272-amino-acid chain: Presporeless protein A (1272 aa).

The short motif at Lys146–Arg161 is the Nuclear localization signal element. Disordered regions lie at residues Ala369–Ser403 and Ser468–Lys490. Acidic residues predominate over residues Asp374–Asp392. A compositionally biased stretch (basic and acidic residues) spans Asp393–Ser403. The span at Ser468–Asn487 shows a compositional bias: low complexity.

The protein localises to the nucleus. Its function is as follows. Functions autonomously, very early in the prespore pathway, to control prespore cell differentiation, maybe at the level of transcription. Also required for proper aggregation. In Dictyostelium discoideum (Social amoeba), this protein is Presporeless protein A (pslA).